The following is a 239-amino-acid chain: Probable transcriptional regulatory protein ACL_0044 (239 aa).

Belongs to the TACO1 family.

The protein resides in the cytoplasm. The polypeptide is Probable transcriptional regulatory protein ACL_0044 (Acholeplasma laidlawii (strain PG-8A)).